The following is an 88-amino-acid chain: Small ribosomal subunit protein bS20 (88 aa).

Belongs to the bacterial ribosomal protein bS20 family.

In terms of biological role, binds directly to 16S ribosomal RNA. The sequence is that of Small ribosomal subunit protein bS20 from Clostridium acetobutylicum (strain ATCC 824 / DSM 792 / JCM 1419 / IAM 19013 / LMG 5710 / NBRC 13948 / NRRL B-527 / VKM B-1787 / 2291 / W).